Here is a 404-residue protein sequence, read N- to C-terminus: MKLPIYLDYSATTPVDPRVAEKMMQFMTMDGTFGNPASRSHRFGWQAEEAVDIARNQIADLVGADPREIVFTSGATESDNLAIKGAANFYQKKGKHIITSKTEHKAVLDTCRQLEREGFEVTYLAPQRNGIIDLKELEAAMRDDTILVSIMHVNNEIGVVQDIAAIGEMCRARGIIYHVDATQSVGKLPIDLSQLKVDLMSFSGHKIYGPKGIGALYVRRKPRVRIEAQMHGGGHERGMRSGTLPVHQIVGMGEAYRIAKEEMATEMERLRGLRNRLWNGIKDIEEVYLNGDLEHGAPNILNVSFNYVEGESLIMALKDLAVSSGSACTSASLEPSYVLRALGLNDELAHSSIRFSLGRFTTEEEIDYTIELVRKSIGRLRDLSPLWEMYKQGVDLNSIEWAHH.

Residues 75–76 (AT), asparagine 155, glutamine 183, and 203–205 (SGH) contribute to the pyridoxal 5'-phosphate site. N6-(pyridoxal phosphate)lysine is present on lysine 206. Position 243 (threonine 243) interacts with pyridoxal 5'-phosphate. Residue cysteine 328 is the Cysteine persulfide intermediate of the active site. Position 328 (cysteine 328) interacts with [2Fe-2S] cluster.

Belongs to the class-V pyridoxal-phosphate-dependent aminotransferase family. NifS/IscS subfamily. Homodimer. Forms a heterotetramer with IscU, interacts with other sulfur acceptors. The cofactor is pyridoxal 5'-phosphate.

Its subcellular location is the cytoplasm. It catalyses the reaction (sulfur carrier)-H + L-cysteine = (sulfur carrier)-SH + L-alanine. The protein operates within cofactor biosynthesis; iron-sulfur cluster biosynthesis. Functionally, master enzyme that delivers sulfur to a number of partners involved in Fe-S cluster assembly, tRNA modification or cofactor biosynthesis. Catalyzes the removal of elemental sulfur and selenium atoms from cysteine and selenocysteine to produce alanine. Functions as a sulfur delivery protein for Fe-S cluster synthesis onto IscU, an Fe-S scaffold assembly protein, as well as other S acceptor proteins. Also functions as a selenium delivery protein in the pathway for the biosynthesis of selenophosphate. The sequence is that of Cysteine desulfurase IscS from Escherichia coli (strain K12 / DH10B).